Consider the following 333-residue polypeptide: Ketol-acid reductoisomerase (NADP(+)) (333 aa).

Positions 2 to 182 (AKIYYDEDAS…GATRAGVIET (181 aa)) constitute a KARI N-terminal Rossmann domain. NADP(+) is bound by residues 25–28 (YGSQ), Ser-51, Ser-53, and 83–86 (DTVQ). Residue His-108 is part of the active site. Residue Gly-134 participates in NADP(+) binding. The 145-residue stretch at 183–327 (TFKEETETDL…EELRKMMPWL (145 aa)) folds into the KARI C-terminal knotted domain. Positions 191, 195, 227, and 231 each coordinate Mg(2+). Ser-252 serves as a coordination point for substrate.

This sequence belongs to the ketol-acid reductoisomerase family. Requires Mg(2+) as cofactor.

The enzyme catalyses (2R)-2,3-dihydroxy-3-methylbutanoate + NADP(+) = (2S)-2-acetolactate + NADPH + H(+). It catalyses the reaction (2R,3R)-2,3-dihydroxy-3-methylpentanoate + NADP(+) = (S)-2-ethyl-2-hydroxy-3-oxobutanoate + NADPH + H(+). Its pathway is amino-acid biosynthesis; L-isoleucine biosynthesis; L-isoleucine from 2-oxobutanoate: step 2/4. It participates in amino-acid biosynthesis; L-valine biosynthesis; L-valine from pyruvate: step 2/4. In terms of biological role, involved in the biosynthesis of branched-chain amino acids (BCAA). Catalyzes an alkyl-migration followed by a ketol-acid reduction of (S)-2-acetolactate (S2AL) to yield (R)-2,3-dihydroxy-isovalerate. In the isomerase reaction, S2AL is rearranged via a Mg-dependent methyl migration to produce 3-hydroxy-3-methyl-2-ketobutyrate (HMKB). In the reductase reaction, this 2-ketoacid undergoes a metal-dependent reduction by NADPH to yield (R)-2,3-dihydroxy-isovalerate. This is Ketol-acid reductoisomerase (NADP(+)) from Aquifex aeolicus (strain VF5).